Reading from the N-terminus, the 204-residue chain is Holliday junction branch migration complex subunit RuvA (204 aa).

Positions 1–67 (MIGYLEGKIL…QPKPVLIGFN (67 aa)) are domain I. Residues 68-145 (SLEEREFFER…VFAGEHGGEP (78 aa)) are domain II. A flexible linker region spans residues 146–156 (AGPAPVEENFH). The interval 156–204 (HLLVLDVLVNQLGHKAAEAKELINQAIKRNPAISSPEELFDEVYRGETG) is domain III.

The protein belongs to the RuvA family. In terms of assembly, homotetramer. Forms an RuvA(8)-RuvB(12)-Holliday junction (HJ) complex. HJ DNA is sandwiched between 2 RuvA tetramers; dsDNA enters through RuvA and exits via RuvB. An RuvB hexamer assembles on each DNA strand where it exits the tetramer. Each RuvB hexamer is contacted by two RuvA subunits (via domain III) on 2 adjacent RuvB subunits; this complex drives branch migration. In the full resolvosome a probable DNA-RuvA(4)-RuvB(12)-RuvC(2) complex forms which resolves the HJ.

It localises to the cytoplasm. Its function is as follows. The RuvA-RuvB-RuvC complex processes Holliday junction (HJ) DNA during genetic recombination and DNA repair, while the RuvA-RuvB complex plays an important role in the rescue of blocked DNA replication forks via replication fork reversal (RFR). RuvA specifically binds to HJ cruciform DNA, conferring on it an open structure. The RuvB hexamer acts as an ATP-dependent pump, pulling dsDNA into and through the RuvAB complex. HJ branch migration allows RuvC to scan DNA until it finds its consensus sequence, where it cleaves and resolves the cruciform DNA. The chain is Holliday junction branch migration complex subunit RuvA from Desulfatibacillum aliphaticivorans.